The following is a 1015-amino-acid chain: MQPTEDLPRGTPLSSTGHPLPRRTSPEQSVTLRHHQLARDASLKASLGSAPPNDSNENSSSPRRASSGESHETGQSDAKKWFNQSNQNPTATFDSNAMDVDPPFFQKESDSSNEDKPYQFPPATIRIQSNARSSSADDYRSVIDDLTVEIQKLKEELKRYKQRGPDMLRKDKLFEIKIHGLPKRKKRELEATLREFTATLEGSPNTSSSKRNSTTKPSRHATRDRMYSGSGSKSQSKHASSSSGSHTRPVDSAYASMSTGAGSSGTSLNRPQGGSRFKTNEQKVDHYLREIPEGLYPRFVSMTEKEKKKLVVRRLEQIFTGKIGGKHVRRTQPTLTPAVSIALPAVQATSIDFSPQQQQQQQQQQQQQPKSNFITNPGATFSSVPEPLREARILPQEHQYGHVAGQKGRSHDIGSASNSNEDQTESGGNGNSSSNGNDSGTNPSPPMPPPPEQRPTRPRDLDPDRIQIPSENMEYIRHLGLVPPELLTNPPERTSFDFHPDEEGWVYLNLLCNMAQLHIMSVTPDFVRNAVVDLSAKFQLSPDGRKIRWRGGTDGTKFSSESSGDLSQRSPETDDTENTKGDNHKRQKTGHSTGDSGSSGNNLPKFGGPQVSASSESFHYKPLFLHQQSPNEQSSMEDGTLSSFGPIEESNADSRWGQSGSGASNRRKRRRDGAIIYYSGAPFCTDLSGDPGDTSPATYMLSSERERPDAQGQFARPLPFRSGSGSSITRRPLSDAHLNLGSIPKLQLLNEGVSIPELVTDSGDESSKLSMEFPWSDEPQILEVRPLEPCGLGGVRPEDHFMVVVTTRRSKLDARVGQRLEGQRKLSEEMTDIVVNRLATMSTSSPRPSVRRLSNMSDSSKIKIEYLSGRIKRLEPVSLPPPAIFFPPFSADSCSEDDFGSDGDDEFNSSEEFMSRRANPHQSDDYPDGVDLSSGDEDGEEPEDDIDASRMVDDMSLPGLGRVPRGSQASTEVVPGSSRGRSNSASAEAVLRAGGSSAATAGGVESDFSISSSQG.

Disordered regions lie at residues 1 to 138, 183 to 285, 352 to 383, 402 to 465, 544 to 614, 629 to 668, 706 to 728, and 895 to 1015; these read MQPT…SADD, KRKK…QKVD, DFSP…TFSS, HVAG…DPDR, GRKI…VSAS, SPNE…NRRK, ERPD…GSSI, and SEDD…SSQG. The span at 49 to 68 shows a compositional bias: low complexity; it reads SAPPNDSNENSSSPRRASSG. A compositionally biased stretch (basic and acidic residues) spans 69–80; that stretch reads ESHETGQSDAKK. The span at 82–95 shows a compositional bias: polar residues; it reads FNQSNQNPTATFDS. Residues 107 to 117 show a composition bias toward basic and acidic residues; the sequence is KESDSSNEDKP. Composition is skewed to low complexity over residues 203–216, 228–267, and 356–368; these read SPNT…STTK, SGSG…SGTS, and QQQQ…QQQQ. Over residues 369–383 the composition is skewed to polar residues; that stretch reads PKSNFITNPGATFSS. Low complexity predominate over residues 431 to 442; sequence NSSSNGNDSGTN. The segment covering 443–453 has biased composition (pro residues); it reads PSPPMPPPPEQ. Residues 454–465 show a composition bias toward basic and acidic residues; that stretch reads RPTRPRDLDPDR. Residues 556 to 570 show a composition bias toward polar residues; that stretch reads TKFSSESSGDLSQRS. The short motif at 584 to 588 is the Nuclear localization signal element; the sequence is HKRQK. Positions 590-600 are enriched in low complexity; the sequence is GHSTGDSGSSG. Residues 629 to 643 are compositionally biased toward polar residues; it reads SPNEQSSMEDGTLSS. Composition is skewed to acidic residues over residues 895–909 and 934–946; these read SEDD…EFNS and SGDE…EDDI. Positions 976–1003 are enriched in low complexity; it reads GSSRGRSNSASAEAVLRAGGSSAATAGG.

Belongs to the FRQ family.

Its subcellular location is the nucleus. Its function is as follows. Circadian clock component involved in the generation of biological rhythms, in particular in rhythm stability, period length, and temperature compensation. Behaves as a negative element in circadian transcriptional loop. This chain is Frequency clock protein (FRQ), found in Trichoderma spinulosum (Hypocrea spinulosa).